The chain runs to 416 residues: Keratin, type I cuticular Ha1 (416 aa).

Residues M1–E56 form a head region. The IF rod domain occupies E56 to L367. The tract at residues K57–R91 is coil 1A. The segment at S92–S102 is linker 1. The interval Y103–C203 is coil 1B. The tract at residues Q204–V219 is linker 12. Positions D220–E363 are coil 2. The segment at D364–R416 is tail.

This sequence belongs to the intermediate filament family. Present in scalp but not in hairless skin. Abundantly expressed in the differentiating cortex of growing (anagen) hair. Expression is restricted to the keratinocytes of the hair cortex and is absent from inner root sheath and medulla.

The protein is Keratin, type I cuticular Ha1 (KRT31) of Homo sapiens (Human).